The chain runs to 560 residues: Oxygen-dependent choline dehydrogenase 1 (560 aa).

8 to 37 (DYIIIGAGSAGNVLATRLTEDPDVQVLLLE) contacts FAD. The Proton acceptor role is filled by H475.

The protein belongs to the GMC oxidoreductase family. FAD serves as cofactor.

It carries out the reaction choline + A = betaine aldehyde + AH2. The enzyme catalyses betaine aldehyde + NAD(+) + H2O = glycine betaine + NADH + 2 H(+). It functions in the pathway amine and polyamine biosynthesis; betaine biosynthesis via choline pathway; betaine aldehyde from choline (cytochrome c reductase route): step 1/1. Involved in the biosynthesis of the osmoprotectant glycine betaine. Catalyzes the oxidation of choline to betaine aldehyde and betaine aldehyde to glycine betaine at the same rate. The polypeptide is Oxygen-dependent choline dehydrogenase 1 (Chromohalobacter salexigens (strain ATCC BAA-138 / DSM 3043 / CIP 106854 / NCIMB 13768 / 1H11)).